The chain runs to 478 residues: ATP-dependent DNA helicase RecQ (478 aa).

One can recognise a Helicase ATP-binding domain in the interval 28 to 202 (IDCLLARRDC…VEGLNLRSPE (175 aa)). 41 to 48 (LPTGGGKS) contributes to the ATP binding site. The DEAH box signature appears at 142-145 (DEAH). One can recognise a Helicase C-terminal domain in the interval 229 to 380 (QLRRFLLKHL…RAEVLSQQIP (152 aa)). 4 residues coordinate Zn(2+): C447, C467, C470, and C473.

It belongs to the helicase family. RecQ subfamily. Mg(2+) serves as cofactor. The cofactor is Zn(2+).

The catalysed reaction is Couples ATP hydrolysis with the unwinding of duplex DNA by translocating in the 3'-5' direction.. It carries out the reaction ATP + H2O = ADP + phosphate + H(+). In terms of biological role, an ATP-dependent DNA helicase which unwinds DNA in a 3'-5' direction. In Synechocystis sp. (strain ATCC 27184 / PCC 6803 / Kazusa), this protein is ATP-dependent DNA helicase RecQ.